The following is a 273-amino-acid chain: Protein ALUMINUM SENSITIVE 3 (273 aa).

Helical transmembrane passes span 14–34 (WLIVFLKGMVKPAAALVVVLL), 51–71 (IYSVSRSFLQLSVIGFVLQFI), 76–96 (NSGWIILAYLFMVSVAGYTAG), 107–127 (YVAGLSILAGTSITMFLLVLL), 136–156 (YMIPIAGMLVGNAMTVTGVTM), 191–213 (ALVISLSPVLDSCKTVGLISLPG), and 228–248 (AIQLQIVVMNMMVGAATVSSI).

It belongs to the UPF0014 family. Expressed in roots, leaves, stems, and flowers.

The protein localises to the cell membrane. Its function is as follows. Required for aluminum (Al) resistance/tolerance, probably by translocating Al from sensitive tissues such as growing roots to tissues less sensisitive to the toxic effects of Al. The chain is Protein ALUMINUM SENSITIVE 3 (ALS3) from Arabidopsis thaliana (Mouse-ear cress).